Reading from the N-terminus, the 180-residue chain is Translation initiation factor IF-3 (180 aa).

Belongs to the IF-3 family. Monomer.

It is found in the cytoplasm. IF-3 binds to the 30S ribosomal subunit and shifts the equilibrium between 70S ribosomes and their 50S and 30S subunits in favor of the free subunits, thus enhancing the availability of 30S subunits on which protein synthesis initiation begins. This is Translation initiation factor IF-3 from Escherichia coli (strain K12 / MC4100 / BW2952).